The primary structure comprises 307 residues: MTEQALLSELDRLVSEERNPRTMDIDLLSSLAIVRRINDEDHLVPAAVEQVLPQVAQAVDKVVDAFRVGGRLIYLGAGTSGRLGVLDASECPPTFSVPEGMVIGLIAGGVDALQHAIEGAEDDPSLGESDLRNIGLTSHDVVVGIAVSGRTPYVIGGLAYAESIGATTVALSCNPDSTIATMAEIAISPVVGPEILTGSTRLKSGTAQKLVLNMLTTASMIRIGKTYENLMVDVSATNNKLVARASRIVMQATGCGAGEAKRVLALTDNEVKLAILITITGMPVDEARKALKNAGGFLRQAINANKA.

The SIS domain maps to 62–225 (VVDAFRVGGR…TTASMIRIGK (164 aa)). The active-site Proton donor is Glu-90. Glu-121 is an active-site residue.

This sequence belongs to the GCKR-like family. MurNAc-6-P etherase subfamily. Homodimer.

It carries out the reaction N-acetyl-D-muramate 6-phosphate + H2O = N-acetyl-D-glucosamine 6-phosphate + (R)-lactate. It participates in amino-sugar metabolism; 1,6-anhydro-N-acetylmuramate degradation. The protein operates within amino-sugar metabolism; N-acetylmuramate degradation. Its pathway is cell wall biogenesis; peptidoglycan recycling. Specifically catalyzes the cleavage of the D-lactyl ether substituent of MurNAc 6-phosphate, producing GlcNAc 6-phosphate and D-lactate. Together with AnmK, is also required for the utilization of anhydro-N-acetylmuramic acid (anhMurNAc) either imported from the medium or derived from its own cell wall murein, and thus plays a role in cell wall recycling. The polypeptide is N-acetylmuramic acid 6-phosphate etherase (Brucella anthropi (strain ATCC 49188 / DSM 6882 / CCUG 24695 / JCM 21032 / LMG 3331 / NBRC 15819 / NCTC 12168 / Alc 37) (Ochrobactrum anthropi)).